The sequence spans 334 residues: MSTEVISTSVVSEPTQEILPAEYSLDAPEPEHCPGPESEMAGKADACQTCENKDICESLPKGPDPDIPLITENLSGIKHKILVLSGKGGVGKSTFTTMLSWALSADDNLQVGAMDLDICGPSLPHMLGCTDEVVHESNTGWTPVYVAENLAAMSIQFMLPEDDSAVIWRGNKKNLLIKKFLKDVVWDDLDYLVVDTPPGTSDEHISINKYMKESGIDGALVVTTPQEVALLDVRKEIDFCRKAGINILGLVENMSGFVCPNCKGESQIFKPTTGGGEALCKELGIKFLGSVPLDPRIGRCSDEGESFLDEFPDSPATLAVLNVVEELRDAVGDV.

Positions 33, 47, 50, and 56 each coordinate [4Fe-4S] cluster. Residue 86 to 93 (GKGGVGKS) coordinates ATP. Residues cysteine 259 and cysteine 262 each contribute to the [4Fe-4S] cluster site.

Belongs to the Mrp/NBP35 ATP-binding proteins family. NUBP1/NBP35 subfamily. In terms of assembly, heterotetramer of 2 NBP35 and 2 CFD1 chains. It depends on [4Fe-4S] cluster as a cofactor.

It is found in the cytoplasm. It localises to the nucleus. Functionally, component of the cytosolic iron-sulfur (Fe/S) protein assembly (CIA) machinery. Required for maturation of extramitochondrial Fe-S proteins. The NBP35-CFD1 heterotetramer forms a Fe-S scaffold complex, mediating the de novo assembly of an Fe-S cluster and its transfer to target apoproteins. Required for biogenesis and export of both ribosomal subunits, which may reflect a role in assembly of the Fe/S clusters in RLI1, a protein which performs rRNA processing and ribosome export. The chain is Cytosolic Fe-S cluster assembly factor NBP35 from Candida glabrata (strain ATCC 2001 / BCRC 20586 / JCM 3761 / NBRC 0622 / NRRL Y-65 / CBS 138) (Yeast).